Consider the following 325-residue polypeptide: tRNA N6-adenosine threonylcarbamoyltransferase (325 aa).

Fe cation is bound by residues His107 and His111. Residues 129-133 (LVSGG), Asp162, Gly175, and Asn265 each bind substrate. Asp293 lines the Fe cation pocket.

Belongs to the KAE1 / TsaD family. It depends on Fe(2+) as a cofactor.

The protein resides in the cytoplasm. It carries out the reaction L-threonylcarbamoyladenylate + adenosine(37) in tRNA = N(6)-L-threonylcarbamoyladenosine(37) in tRNA + AMP + H(+). Functionally, required for the formation of a threonylcarbamoyl group on adenosine at position 37 (t(6)A37) in tRNAs that read codons beginning with adenine. Is involved in the transfer of the threonylcarbamoyl moiety of threonylcarbamoyl-AMP (TC-AMP) to the N6 group of A37, together with TsaE and TsaB. TsaD likely plays a direct catalytic role in this reaction. The sequence is that of tRNA N6-adenosine threonylcarbamoyltransferase from Sulfurimonas denitrificans (strain ATCC 33889 / DSM 1251) (Thiomicrospira denitrificans (strain ATCC 33889 / DSM 1251)).